The primary structure comprises 274 residues: Cytochrome c oxidase subunit 3 (274 aa).

The Mitochondrial matrix portion of the chain corresponds to Met1 to Pro15. A helical membrane pass occupies residues Trp16 to Trp34. The Mitochondrial intermembrane portion of the chain corresponds to Phe35–Ser40. Residues Met41–Thr66 form a helical membrane-spanning segment. At Phe67–Thr72 the chain is on the mitochondrial matrix side. Residues Ser73 to Ser105 traverse the membrane as a helical segment. Over Leu106 to Glu128 the chain is Mitochondrial intermembrane. The chain crosses the membrane as a helical span at residues Val129 to Met152. At Glu153–Asn155 the chain is on the mitochondrial matrix side. The helical transmembrane segment at Arg156–Glu183 threads the bilayer. The Mitochondrial intermembrane segment spans residues Thr184–Asp190. A helical membrane pass occupies residues Gly191–Leu223. The Mitochondrial matrix segment spans residues Ser224–His232. The chain crosses the membrane as a helical span at residues Phe233–Ile256. Over Tyr257–Asn274 the chain is Mitochondrial intermembrane.

Belongs to the cytochrome c oxidase subunit 3 family. Component of the cytochrome c oxidase (complex IV, CIV), a multisubunit enzyme composed of 14 subunits. The complex is composed of a catalytic core of 3 subunits MT-CO1, MT-CO2 and MT-CO3, encoded in the mitochondrial DNA, and 11 supernumerary subunits COX4I, COX5A, COX5B, COX6A, COX6B, COX6C, COX7A, COX7B, COX7C, COX8 and NDUFA4, which are encoded in the nuclear genome. The complex exists as a monomer or a dimer and forms supercomplexes (SCs) in the inner mitochondrial membrane with NADH-ubiquinone oxidoreductase (complex I, CI) and ubiquinol-cytochrome c oxidoreductase (cytochrome b-c1 complex, complex III, CIII), resulting in different assemblies (supercomplex SCI(1)III(2)IV(1) and megacomplex MCI(2)III(2)IV(2)).

It localises to the mitochondrion inner membrane. It carries out the reaction 4 Fe(II)-[cytochrome c] + O2 + 8 H(+)(in) = 4 Fe(III)-[cytochrome c] + 2 H2O + 4 H(+)(out). Component of the cytochrome c oxidase, the last enzyme in the mitochondrial electron transport chain which drives oxidative phosphorylation. The respiratory chain contains 3 multisubunit complexes succinate dehydrogenase (complex II, CII), ubiquinol-cytochrome c oxidoreductase (cytochrome b-c1 complex, complex III, CIII) and cytochrome c oxidase (complex IV, CIV), that cooperate to transfer electrons derived from NADH and succinate to molecular oxygen, creating an electrochemical gradient over the inner membrane that drives transmembrane transport and the ATP synthase. Cytochrome c oxidase is the component of the respiratory chain that catalyzes the reduction of oxygen to water. Electrons originating from reduced cytochrome c in the intermembrane space (IMS) are transferred via the dinuclear copper A center (CU(A)) of subunit 2 and heme A of subunit 1 to the active site in subunit 1, a binuclear center (BNC) formed by heme A3 and copper B (CU(B)). The BNC reduces molecular oxygen to 2 water molecules using 4 electrons from cytochrome c in the IMS and 4 protons from the mitochondrial matrix. This Lemur catta (Ring-tailed lemur) protein is Cytochrome c oxidase subunit 3 (MT-CO3).